The chain runs to 398 residues: Lysophosphatidylserine lipase ABHD12 (398 aa).

The span at 1 to 16 (MRKRTEPVALEHERRT) shows a compositional bias: basic and acidic residues. The disordered stretch occupies residues 1–24 (MRKRTEPVALEHERRTASGSPSAG). Topologically, residues 1 to 74 (MRKRTEPVAL…RKGLCFRLRK (74 aa)) are cytoplasmic. Residues 75 to 95 (ILFFVLGLYVAIPFLIKLCPG) traverse the membrane as a helical segment. The Extracellular portion of the chain corresponds to 96–398 (IQAKLIFLNF…LGKSEPGRQH (303 aa)). The N-linked (GlcNAc...) asparagine glycan is linked to asparagine 123. Residue serine 246 is the Nucleophile of the active site. Catalysis depends on charge relay system residues aspartate 333 and histidine 372.

Belongs to the serine esterase family.

The protein resides in the endoplasmic reticulum membrane. The catalysed reaction is 1-(9Z-octadecenoyl)-sn-glycero-3-phospho-L-serine + H2O = sn-glycero-3-phospho-L-serine + (9Z)-octadecenoate + H(+). It carries out the reaction 1-(9Z-octadecenoyl)-sn-glycero-3-phospho-(1'-sn-glycerol) + H2O = sn-glycero-3-phospho-(1'-sn-glycerol) + (9Z)-octadecenoate + H(+). The enzyme catalyses 1-(9Z-octadecenoyl)-sn-glycero-3-phospho-(1D-myo-inositol) + H2O = sn-glycero-3-phospho-1D-myo-inositol + (9Z)-octadecenoate + H(+). It catalyses the reaction 1-(9Z-octadecenoyl)-sn-glycero-3-phosphoethanolamine + H2O = sn-glycero-3-phosphoethanolamine + (9Z)-octadecenoate + H(+). The catalysed reaction is 1-(9Z-octadecenoyl)-sn-glycero-3-phosphocholine + H2O = 1-(9Z-octadecenoyl)-sn-glycerol + phosphocholine + H(+). It carries out the reaction 2-(9Z-octadecenoyl)-glycerol + H2O = glycerol + (9Z)-octadecenoate + H(+). The enzyme catalyses 1-hexadecanoyl-sn-glycero-3-phospho-L-serine + H2O = sn-glycero-3-phospho-L-serine + hexadecanoate + H(+). It catalyses the reaction 2-(5Z,8Z,11Z,14Z-eicosatetraenoyl)-glycerol + H2O = glycerol + (5Z,8Z,11Z,14Z)-eicosatetraenoate + H(+). The catalysed reaction is Hydrolyzes glycerol monoesters of long-chain fatty acids.. It carries out the reaction 1-decanoylglycerol + H2O = decanoate + glycerol + H(+). The enzyme catalyses 1-dodecanoylglycerol + H2O = dodecanoate + glycerol + H(+). It catalyses the reaction 1-tetradecanoylglycerol + H2O = tetradecanoate + glycerol + H(+). The catalysed reaction is 2-hexadecanoylglycerol + H2O = glycerol + hexadecanoate + H(+). It carries out the reaction 1-(9Z-octadecenoyl)-glycerol + H2O = glycerol + (9Z)-octadecenoate + H(+). The enzyme catalyses 2-(9Z,12Z-octadecadienoyl)-glycerol + H2O = (9Z,12Z)-octadecadienoate + glycerol + H(+). It catalyses the reaction 1-(5Z,8Z,11Z,14Z-eicosatetraenoyl)-glycerol + H2O = glycerol + (5Z,8Z,11Z,14Z)-eicosatetraenoate + H(+). The catalysed reaction is 1-(9Z,12Z-octadecadienoyl)-glycerol + H2O = (9Z,12Z)-octadecadienoate + glycerol + H(+). It carries out the reaction 1-hexadecanoylglycerol + H2O = glycerol + hexadecanoate + H(+). The enzyme catalyses 1-octadecanoylglycerol + H2O = octadecanoate + glycerol + H(+). It catalyses the reaction 1-octadecanoyl-2-(9,10-epoxyoctadecanoyl)-sn-glycero-3-phospho-L-serine + H2O = 9,10-epoxyoctadecanoate + 1-octadecanoyl-sn-glycero-3-phosphoserine + H(+). The catalysed reaction is 1-octadecanoyl-2-(10-hydroxyoctadecanoyl)-sn-glycero-3-phospho-L-serine + H2O = 1-octadecanoyl-sn-glycero-3-phosphoserine + 10-hydroxyoctadecanoate + H(+). It carries out the reaction 1-hexadecanoyl-2-(10-hydroxyoctadecanoyl)-sn-glycero-3-phospho-L-serine + H2O = 10-hydroxyoctadecanoate + 1-hexadecanoyl-sn-glycero-3-phospho-L-serine + H(+). Its function is as follows. Lysophosphatidylserine (LPS) lipase that mediates the hydrolysis of lysophosphatidylserine, a class of signaling lipids that regulates immunological and neurological processes. Represents a major lysophosphatidylserine lipase in the brain, thereby playing a key role in the central nervous system. Also able to hydrolyze oxidized phosphatidylserine; oxidized phosphatidylserine is produced in response to severe inflammatory stress and constitutes a proapoptotic 'eat me' signal. Also has monoacylglycerol (MAG) lipase activity: hydrolyzes 2-arachidonoylglycerol (2-AG), thereby acting as a regulator of endocannabinoid signaling pathways. Has a strong preference for very-long-chain lipid substrates; substrate specificity is likely due to improved catalysis and not improved substrate binding. The sequence is that of Lysophosphatidylserine lipase ABHD12 from Bos taurus (Bovine).